The following is a 331-amino-acid chain: Elongation factor Ts, mitochondrial (331 aa).

The segment at 254–295 (SPLTVGEMPEVREEEGEKKDGDKQDEEERSTDSDEDETQMLR) is disordered. Over residues 262–275 (PEVREEEGEKKDGD) the composition is skewed to basic and acidic residues. A compositionally biased stretch (acidic residues) spans 276 to 291 (KQDEEERSTDSDEDET).

The protein belongs to the EF-Ts family.

The protein localises to the mitochondrion. Its function is as follows. Associates with the EF-Tu.GDP complex and induces the exchange of GDP to GTP. It remains bound to the aminoacyl-tRNA.EF-Tu.GTP complex up to the GTP hydrolysis stage on the ribosome. The chain is Elongation factor Ts, mitochondrial from Branchiostoma floridae (Florida lancelet).